A 507-amino-acid polypeptide reads, in one-letter code: Cystathionine beta-synthase (507 aa).

At Lys53 the chain carries N6-(pyridoxal phosphate)lysine. A pyridoxal 5'-phosphate-binding site is contributed by Asn84. Phosphoserine is present on Ser134. Pyridoxal 5'-phosphate contacts are provided by residues 196–200 (GTGGT) and Ser289. A phosphoserine mark is found at Ser350 and Ser424. Positions 373-432 (HLKPVVSVKETAKVTDVIKILKDNGFDQLPVLTEDGKLSGLVTLSELLRKLSINNSNNDN) constitute a CBS domain.

It belongs to the cysteine synthase/cystathionine beta-synthase family. Pyridoxal 5'-phosphate is required as a cofactor.

The enzyme catalyses L-homocysteine + L-serine = L,L-cystathionine + H2O. The protein operates within amino-acid biosynthesis; L-cysteine biosynthesis; L-cysteine from L-homocysteine and L-serine: step 1/2. This chain is Cystathionine beta-synthase (CYS4), found in Saccharomyces cerevisiae (strain ATCC 204508 / S288c) (Baker's yeast).